A 333-amino-acid chain; its full sequence is Threonine-phosphate decarboxylase (333 aa).

N6-(pyridoxal phosphate)lysine is present on lysine 199.

This sequence belongs to the class-I pyridoxal-phosphate-dependent aminotransferase family. In terms of assembly, homodimer. Requires pyridoxal 5'-phosphate as cofactor.

It localises to the cytoplasm. It carries out the reaction O-phospho-L-threonine + H(+) = (R)-1-aminopropan-2-yl phosphate + CO2. Its pathway is cofactor biosynthesis; adenosylcobalamin biosynthesis. Decarboxylates L-threonine-O-3-phosphate to yield (R)-1-amino-2-propanol O-2-phosphate, the precursor for the linkage between the nucleotide loop and the corrin ring in cobalamin. This Sinorhizobium sp protein is Threonine-phosphate decarboxylase (cobC).